The chain runs to 185 residues: uncharacterized protein (185 aa).

The next 2 membrane-spanning stretches (helical) occupy residues 1 to 19 and 105 to 125; these read MLNIVLIIGLLAIFNTSSA and AGFIAQCIIFLFVYTIVTMDV.

Its subcellular location is the membrane. This is an uncharacterized protein from Caenorhabditis elegans.